The primary structure comprises 176 residues: NAD(P)H-quinone oxidoreductase subunit J (176 aa).

Belongs to the complex I 30 kDa subunit family. As to quaternary structure, NDH-1 can be composed of about 15 different subunits; different subcomplexes with different compositions have been identified which probably have different functions.

The protein localises to the cell inner membrane. The enzyme catalyses a plastoquinone + NADH + (n+1) H(+)(in) = a plastoquinol + NAD(+) + n H(+)(out). It carries out the reaction a plastoquinone + NADPH + (n+1) H(+)(in) = a plastoquinol + NADP(+) + n H(+)(out). NDH-1 shuttles electrons from an unknown electron donor, via FMN and iron-sulfur (Fe-S) centers, to quinones in the respiratory and/or the photosynthetic chain. The immediate electron acceptor for the enzyme in this species is believed to be plastoquinone. Couples the redox reaction to proton translocation, and thus conserves the redox energy in a proton gradient. Cyanobacterial NDH-1 also plays a role in inorganic carbon-concentration. The protein is NAD(P)H-quinone oxidoreductase subunit J of Gloeobacter violaceus (strain ATCC 29082 / PCC 7421).